The following is a 219-amino-acid chain: Probable nicotinate-nucleotide adenylyltransferase (219 aa).

Belongs to the NadD family.

It catalyses the reaction nicotinate beta-D-ribonucleotide + ATP + H(+) = deamido-NAD(+) + diphosphate. It participates in cofactor biosynthesis; NAD(+) biosynthesis; deamido-NAD(+) from nicotinate D-ribonucleotide: step 1/1. In terms of biological role, catalyzes the reversible adenylation of nicotinate mononucleotide (NaMN) to nicotinic acid adenine dinucleotide (NaAD). The sequence is that of Probable nicotinate-nucleotide adenylyltransferase from Enterococcus faecalis (strain ATCC 700802 / V583).